A 316-amino-acid polypeptide reads, in one-letter code: 4-hydroxy-3-methylbut-2-enyl diphosphate reductase (316 aa).

Cysteine 12 lines the [4Fe-4S] cluster pocket. The (2E)-4-hydroxy-3-methylbut-2-enyl diphosphate site is built by histidine 43 and histidine 81. Residues histidine 43 and histidine 81 each coordinate dimethylallyl diphosphate. Isopentenyl diphosphate-binding residues include histidine 43 and histidine 81. Cysteine 103 is a binding site for [4Fe-4S] cluster. Residue histidine 131 participates in (2E)-4-hydroxy-3-methylbut-2-enyl diphosphate binding. Histidine 131 provides a ligand contact to dimethylallyl diphosphate. Position 131 (histidine 131) interacts with isopentenyl diphosphate. Glutamate 133 acts as the Proton donor in catalysis. Threonine 170 provides a ligand contact to (2E)-4-hydroxy-3-methylbut-2-enyl diphosphate. Residue cysteine 198 coordinates [4Fe-4S] cluster. 3 residues coordinate (2E)-4-hydroxy-3-methylbut-2-enyl diphosphate: serine 226, asparagine 228, and serine 271. The dimethylallyl diphosphate site is built by serine 226, asparagine 228, and serine 271. Isopentenyl diphosphate contacts are provided by serine 226, asparagine 228, and serine 271.

This sequence belongs to the IspH family. [4Fe-4S] cluster is required as a cofactor.

The enzyme catalyses isopentenyl diphosphate + 2 oxidized [2Fe-2S]-[ferredoxin] + H2O = (2E)-4-hydroxy-3-methylbut-2-enyl diphosphate + 2 reduced [2Fe-2S]-[ferredoxin] + 2 H(+). It catalyses the reaction dimethylallyl diphosphate + 2 oxidized [2Fe-2S]-[ferredoxin] + H2O = (2E)-4-hydroxy-3-methylbut-2-enyl diphosphate + 2 reduced [2Fe-2S]-[ferredoxin] + 2 H(+). It participates in isoprenoid biosynthesis; dimethylallyl diphosphate biosynthesis; dimethylallyl diphosphate from (2E)-4-hydroxy-3-methylbutenyl diphosphate: step 1/1. The protein operates within isoprenoid biosynthesis; isopentenyl diphosphate biosynthesis via DXP pathway; isopentenyl diphosphate from 1-deoxy-D-xylulose 5-phosphate: step 6/6. Catalyzes the conversion of 1-hydroxy-2-methyl-2-(E)-butenyl 4-diphosphate (HMBPP) into a mixture of isopentenyl diphosphate (IPP) and dimethylallyl diphosphate (DMAPP). Acts in the terminal step of the DOXP/MEP pathway for isoprenoid precursor biosynthesis. The polypeptide is 4-hydroxy-3-methylbut-2-enyl diphosphate reductase (Geobacillus thermodenitrificans (strain NG80-2)).